The sequence spans 331 residues: PIN2/TERF1-interacting telomerase inhibitor 1 (331 aa).

3 disordered regions span residues 1–28 (MSML…DDSK), 156–175 (AQDG…LTTT), and 197–331 (SKSQ…KVSR). The region spanning 26 to 72 (DSKFGQKMLEKMGWSKGKGLGAQEQGATEHIKVKVKNNHLGLGATNN) is the G-patch domain. At Ser233 the chain carries Phosphoserine. Residues 236–246 (HKAKRHKKKKR) are compositionally biased toward basic residues. The span at 247–261 (VEAERGPAAKKRDQV) shows a compositional bias: basic and acidic residues. Positions 254 to 328 (AAKKRDQVEL…DSAPVKKKKK (75 aa)) are telomerase inhibitory domain (TID). Ser269, Ser274, and Ser277 each carry phosphoserine. A TBM motif is present at residues 291–301 (QDDVPKPRKRR). The segment covering 297-306 (PRKRRAKKTL) has biased composition (basic residues).

It belongs to the PINX1 family. Interacts with MCRS1, TERT, TERF1, NCL/nucleolin, and the telomerase RNA.

It localises to the nucleus. Its subcellular location is the nucleolus. The protein localises to the chromosome. The protein resides in the telomere. It is found in the centromere. It localises to the kinetochore. Its function is as follows. Microtubule-binding protein essential for faithful chromosome segregation. Mediates TRF1 and TERT accumulation in nucleolus and enhances TRF1 binding to telomeres. Inhibits telomerase activity. May inhibit cell proliferation and act as tumor suppressor. In Rattus norvegicus (Rat), this protein is PIN2/TERF1-interacting telomerase inhibitor 1.